Consider the following 364-residue polypeptide: Anthranilate phosphoribosyltransferase (364 aa).

5-phospho-alpha-D-ribose 1-diphosphate-binding positions include Gly-101, 104 to 105 (GD), Thr-109, 111 to 114 (NLST), 129 to 137 (KHGNRAASS), and Gly-141. Gly-101 is a binding site for anthranilate. Ser-113 is a binding site for Mg(2+). Asn-132 is a binding site for anthranilate. Anthranilate is bound at residue Arg-187. Residues Asp-245 and Glu-246 each coordinate Mg(2+).

Belongs to the anthranilate phosphoribosyltransferase family. In terms of assembly, homodimer. Requires Mg(2+) as cofactor.

The catalysed reaction is N-(5-phospho-beta-D-ribosyl)anthranilate + diphosphate = 5-phospho-alpha-D-ribose 1-diphosphate + anthranilate. The protein operates within amino-acid biosynthesis; L-tryptophan biosynthesis; L-tryptophan from chorismate: step 2/5. Functionally, catalyzes the transfer of the phosphoribosyl group of 5-phosphorylribose-1-pyrophosphate (PRPP) to anthranilate to yield N-(5'-phosphoribosyl)-anthranilate (PRA). This Mycolicibacterium gilvum (strain PYR-GCK) (Mycobacterium gilvum (strain PYR-GCK)) protein is Anthranilate phosphoribosyltransferase.